The primary structure comprises 534 residues: Probable DNA polymerase epsilon subunit 2 (534 aa).

Belongs to the DNA polymerase epsilon subunit B family. Consists of four subunits.

It localises to the nucleus. Functionally, accessory component of the DNA polymerase epsilon complex. Participates in DNA repair and in chromosomal DNA replication. This Caenorhabditis elegans protein is Probable DNA polymerase epsilon subunit 2 (pole-2).